The following is a 474-amino-acid chain: Glutathione synthetase (474 aa).

N-acetylalanine is present on Ala2. Substrate is bound at residue Arg125. Glu144 contacts ATP. 2 residues coordinate Mg(2+): Glu144 and Asn146. Substrate-binding positions include Ile148–Ser151, Glu214–Asn216, Gln220, and Arg267–Tyr270. ATP-binding positions include Lys305, Lys364–Asn373, Tyr375, and Met398–Thr401. Glu368 contributes to the Mg(2+) binding site. Position 415 is a phosphoserine (Ser415). Residue Glu425 participates in ATP binding. Residue Arg450 coordinates substrate. The ATP site is built by Lys452 and Asp458. Val461–Ala462 contacts substrate.

This sequence belongs to the eukaryotic GSH synthase family. Homodimer. It depends on Mg(2+) as a cofactor.

It carries out the reaction gamma-L-glutamyl-L-cysteine + glycine + ATP = glutathione + ADP + phosphate + H(+). Its pathway is sulfur metabolism; glutathione biosynthesis; glutathione from L-cysteine and L-glutamate: step 2/2. Functionally, catalyzes the production of glutathione from gamma-glutamylcysteine and glycine in an ATP-dependent manner. Glutathione (gamma-glutamylcysteinylglycine, GSH) is the most abundant intracellular thiol in living aerobic cells and is required for numerous processes including the protection of cells against oxidative damage, amino acid transport, the detoxification of foreign compounds, the maintenance of protein sulfhydryl groups in a reduced state and acts as a cofactor for a number of enzymes. The chain is Glutathione synthetase (GSS) from Macaca fascicularis (Crab-eating macaque).